We begin with the raw amino-acid sequence, 402 residues long: MFVPRQLNVRKIKAFTGKENNSIADGNNNKLKDEHYKHNEASKEPSHSISGGLMLNQQDRQLIEPLNPDFLSAVDSILEIYFHRERQKEKVHLAFLIQQDDFWKGIRPNPTQNNLKYALSYVTNALFHFDNSSHMVIRNENIVLPLDIPLYDRIIYVEPVPATLSNKSLLLAGKLRKYLKEFLPYVDAIGTPEGYAFVILYKKVDQSALSKLPVPPGWVLLTRKEWTNREEKYFENQLHLVKASSSDVSNSSNSFPENRYPKLTKVEKQMTKSVSKTSQTDKDEDNLDFTKNLLTRIKNLHPLTNKSTIHSLLSYVFSRQTQNIACEPMYIDYRKDETEAIIRWKTPLHAETCINAFRTQERKQNSHDDIRAHRKKGSSRPFLIAELITGEEEKNYWRMLKK.

The tract at residues 64–138 is HTH La-type RNA-binding-like region; it reads EPLNPDFLSA…FDNSSHMVIR (75 aa). The interval 148–230 is RRM-like region; it reads IPLYDRIIYV…LTRKEWTNRE (83 aa). The tract at residues 288–400 is xRRM-like region; the sequence is DFTKNLLTRI…EEEKNYWRML (113 aa). The 115-residue stretch at 288–402 folds into the xRRM domain; sequence DFTKNLLTRI…EKNYWRMLKK (115 aa).

Belongs to the LARP7 family. Component of the telomerase holoenzyme complex composed minimally of trt1 and the telomerase RNA template component. Interacts with skp1.

It localises to the chromosome. It is found in the telomere. The protein resides in the nucleus. The protein localises to the cytoplasm. In terms of biological role, RNA-binding protein required for assembly of the holoenzyme telomerase ribonucleoprotein (RNP) complex. Specifically binds telomerase RNA ter1 and promotes assembly of ter1 with catalytic subunit trt1. Telomerase is a ribonucleoprotein enzyme essential that copies new telomeric repeats onto chromosome ends and functions to maintain cell division. The polypeptide is La-related protein 7 homolog (Schizosaccharomyces pombe (strain 972 / ATCC 24843) (Fission yeast)).